Reading from the N-terminus, the 323-residue chain is GTP 3',8-cyclase (323 aa).

Positions 5–228 constitute a Radical SAM core domain; the sequence is GFGRKVDYLR…TVLRDTSSPA (224 aa). Position 14 (arginine 14) interacts with GTP. Residues cysteine 21 and cysteine 25 each coordinate [4Fe-4S] cluster. Residue tyrosine 27 coordinates S-adenosyl-L-methionine. [4Fe-4S] cluster is bound at residue cysteine 28. Arginine 64 is a binding site for GTP. An S-adenosyl-L-methionine-binding site is contributed by glycine 68. Position 95 (threonine 95) interacts with GTP. Position 119 (serine 119) interacts with S-adenosyl-L-methionine. Lysine 155 is a GTP binding site. Methionine 189 is an S-adenosyl-L-methionine binding site. 2 residues coordinate [4Fe-4S] cluster: cysteine 250 and cysteine 253. 255–257 contacts GTP; that stretch reads RIR. Cysteine 267 is a [4Fe-4S] cluster binding site. Positions 302–313 are enriched in basic and acidic residues; it reads KNKWSQKDDNEV. The disordered stretch occupies residues 302–323; that stretch reads KNKWSQKDDNEVSTRAFYQTGG.

The protein belongs to the radical SAM superfamily. MoaA family. Monomer and homodimer. [4Fe-4S] cluster serves as cofactor.

It catalyses the reaction GTP + AH2 + S-adenosyl-L-methionine = (8S)-3',8-cyclo-7,8-dihydroguanosine 5'-triphosphate + 5'-deoxyadenosine + L-methionine + A + H(+). It functions in the pathway cofactor biosynthesis; molybdopterin biosynthesis. Catalyzes the cyclization of GTP to (8S)-3',8-cyclo-7,8-dihydroguanosine 5'-triphosphate. The chain is GTP 3',8-cyclase from Aliarcobacter butzleri (strain RM4018) (Arcobacter butzleri).